Reading from the N-terminus, the 222-residue chain is Putative N-acetylmannosamine-6-phosphate 2-epimerase (222 aa).

It belongs to the NanE family.

The enzyme catalyses an N-acyl-D-glucosamine 6-phosphate = an N-acyl-D-mannosamine 6-phosphate. Its pathway is amino-sugar metabolism; N-acetylneuraminate degradation; D-fructose 6-phosphate from N-acetylneuraminate: step 3/5. Its function is as follows. Converts N-acetylmannosamine-6-phosphate (ManNAc-6-P) to N-acetylglucosamine-6-phosphate (GlcNAc-6-P). This Staphylococcus aureus (strain USA300) protein is Putative N-acetylmannosamine-6-phosphate 2-epimerase.